A 525-amino-acid polypeptide reads, in one-letter code: uncharacterized protein (525 aa).

Transmembrane regions (helical) follow at residues 36-56 and 61-81; these read AVAA…TLAL and ALPA…AAAI. One can recognise a PAC domain in the interval 173-228; that stretch reads SAVDIRLERTSADGPQFAHIYCEMTPLRDAEGNLLAIVAQSRDVSEEARLQAEAAA. Positions 246–466 constitute a Histidine kinase domain; that stretch reads AVSHELRTPL…VIVVTIPSDA (221 aa). A Phosphohistidine; by autocatalysis modification is found at His249. Residues 506 to 525 form a disordered region; it reads LHTGEIGREGGHGAAQAKTA.

The protein resides in the cell membrane. The catalysed reaction is ATP + protein L-histidine = ADP + protein N-phospho-L-histidine.. This is an uncharacterized protein from Rhizobium meliloti (strain 1021) (Ensifer meliloti).